The primary structure comprises 638 residues: Threonine--tRNA ligase (638 aa).

A TGS domain is found at 1–61 (MPNIKLPDGS…ERDSELAILT (61 aa)). A catalytic region spans residues 242–533 (DHRKLGRQLD…LIEHYAGAMP (292 aa)). Zn(2+) is bound by residues cysteine 333, histidine 384, and histidine 510.

It belongs to the class-II aminoacyl-tRNA synthetase family. Homodimer. The cofactor is Zn(2+).

It localises to the cytoplasm. The catalysed reaction is tRNA(Thr) + L-threonine + ATP = L-threonyl-tRNA(Thr) + AMP + diphosphate + H(+). Its function is as follows. Catalyzes the attachment of threonine to tRNA(Thr) in a two-step reaction: L-threonine is first activated by ATP to form Thr-AMP and then transferred to the acceptor end of tRNA(Thr). Also edits incorrectly charged L-seryl-tRNA(Thr). The chain is Threonine--tRNA ligase from Azoarcus sp. (strain BH72).